The sequence spans 330 residues: NADH-quinone oxidoreductase subunit H (330 aa).

Helical transmembrane passes span 11-31 (ILVAVLKAIVILLAVVVCGAL), 81-101 (FIFVLAPMIAFAAMLMAFAII), 114-134 (IGILFFFAMAGLSVYAVLFAG), 154-174 (ISYEVFLALALMGVVAQVGSF), 187-207 (LWFIIPQFFGFCTFFIAGVAV), 238-258 (FFVGEYVGIVTISALLVTLFF), 270-290 (QIPFFWFALKTAFFIMIFILL), and 309-329 (FCLPLTLINLLVTGALVLAAA).

It belongs to the complex I subunit 1 family. In terms of assembly, NDH-1 is composed of 13 different subunits. Subunits NuoA, H, J, K, L, M, N constitute the membrane sector of the complex.

The protein resides in the cell inner membrane. It carries out the reaction a quinone + NADH + 5 H(+)(in) = a quinol + NAD(+) + 4 H(+)(out). In terms of biological role, NDH-1 shuttles electrons from NADH, via FMN and iron-sulfur (Fe-S) centers, to quinones in the respiratory chain. The immediate electron acceptor for the enzyme in this species is believed to be ubiquinone. Couples the redox reaction to proton translocation (for every two electrons transferred, four hydrogen ions are translocated across the cytoplasmic membrane), and thus conserves the redox energy in a proton gradient. This subunit may bind ubiquinone. This chain is NADH-quinone oxidoreductase subunit H, found in Ectopseudomonas mendocina (strain ymp) (Pseudomonas mendocina).